The sequence spans 135 residues: uncharacterized protein (135 aa).

This is an uncharacterized protein from Acanthamoeba polyphaga (Amoeba).